The primary structure comprises 467 residues: ATP synthase subunit beta (467 aa).

152 to 159 (GGAGVGKT) is an ATP binding site.

It belongs to the ATPase alpha/beta chains family. As to quaternary structure, F-type ATPases have 2 components, CF(1) - the catalytic core - and CF(0) - the membrane proton channel. CF(1) has five subunits: alpha(3), beta(3), gamma(1), delta(1), epsilon(1). CF(0) has three main subunits: a(1), b(2) and c(9-12). The alpha and beta chains form an alternating ring which encloses part of the gamma chain. CF(1) is attached to CF(0) by a central stalk formed by the gamma and epsilon chains, while a peripheral stalk is formed by the delta and b chains.

Its subcellular location is the cell membrane. The catalysed reaction is ATP + H2O + 4 H(+)(in) = ADP + phosphate + 5 H(+)(out). Its function is as follows. Produces ATP from ADP in the presence of a proton gradient across the membrane. The catalytic sites are hosted primarily by the beta subunits. The chain is ATP synthase subunit beta from Caldicellulosiruptor saccharolyticus (strain ATCC 43494 / DSM 8903 / Tp8T 6331).